The chain runs to 258 residues: UPF0246 protein YaaA (258 aa).

It belongs to the UPF0246 family.

The polypeptide is UPF0246 protein YaaA (Escherichia coli O127:H6 (strain E2348/69 / EPEC)).